An 89-amino-acid polypeptide reads, in one-letter code: LYR motif-containing protein 4 (89 aa).

It belongs to the complex I LYR family.

It localises to the mitochondrion. The protein localises to the nucleus. Its pathway is cofactor biosynthesis; iron-sulfur cluster biosynthesis. Functionally, required for nuclear and mitochondrial iron-sulfur protein biosynthesis. This Danio rerio (Zebrafish) protein is LYR motif-containing protein 4 (lyrm4).